The chain runs to 180 residues: Probable macrolide acetyltransferase (180 aa).

This sequence belongs to the transferase hexapeptide repeat family.

This Lysinibacillus sphaericus (Bacillus sphaericus) protein is Probable macrolide acetyltransferase.